The following is a 963-amino-acid chain: VPS35 endosomal protein-sorting factor-like (963 aa).

Disordered regions lie at residues 38 to 71 (ITVT…PLSS) and 85 to 111 (ASET…EEEV). The span at 52-63 (GSTSSSSSSSSS) shows a compositional bias: low complexity.

This sequence belongs to the VPS35L family. Component of the heterotrimeric retriever complex.

It localises to the endosome. In terms of biological role, acts as a component of the retriever complex. The retriever complex is a heterotrimeric complex related to retromer cargo-selective complex (CSC) and essential for retromer-independent retrieval and recycling of numerous cargos such as integrins. The recruitment of the retriever complex to the endosomal membrane involves CCC and WASH complexes. In the endosomes, drives the retrieval and recycling of NxxY-motif-containing cargo proteins by coupling to SNX17, a cargo essential for the homeostatic maintenance of numerous cell surface proteins associated with processes that include cell migration, cell adhesion, nutrient supply and cell signaling. May be involved in copper-dependent atp7a trafficking between the trans-Golgi network and vesicles in the cell periphery. In Danio rerio (Zebrafish), this protein is VPS35 endosomal protein-sorting factor-like (vps35l).